The primary structure comprises 426 residues: Enolase (426 aa).

Residues 32 to 53 (TGRAAVPSGASTGAYEAHEQRD) are disordered. Position 163 (Gln163) interacts with (2R)-2-phosphoglycerate. The Proton donor role is filled by Glu205. Asp242, Glu285, and Asp312 together coordinate Mg(2+). Lys337, Arg366, Ser367, and Lys388 together coordinate (2R)-2-phosphoglycerate. Catalysis depends on Lys337, which acts as the Proton acceptor.

It belongs to the enolase family. Mg(2+) is required as a cofactor.

Its subcellular location is the cytoplasm. The protein resides in the secreted. It is found in the cell surface. The catalysed reaction is (2R)-2-phosphoglycerate = phosphoenolpyruvate + H2O. Its pathway is carbohydrate degradation; glycolysis; pyruvate from D-glyceraldehyde 3-phosphate: step 4/5. Catalyzes the reversible conversion of 2-phosphoglycerate (2-PG) into phosphoenolpyruvate (PEP). It is essential for the degradation of carbohydrates via glycolysis. This Hyphomonas neptunium (strain ATCC 15444) protein is Enolase.